The chain runs to 320 residues: Cytochrome f (320 aa).

The N-terminal stretch at 1–35 (MQTRKTFSWIKEQIARSISVSLLIYIITRTSISSA) is a signal peptide. Tyr-36, Cys-56, Cys-59, and His-60 together coordinate heme. The helical transmembrane segment at 286 to 306 (VQGLLFFLASVILAQIFLVLK) threads the bilayer.

The protein belongs to the cytochrome f family. The 4 large subunits of the cytochrome b6-f complex are cytochrome b6, subunit IV (17 kDa polypeptide, petD), cytochrome f and the Rieske protein, while the 4 small subunits are PetG, PetL, PetM and PetN. The complex functions as a dimer. Heme serves as cofactor.

The protein resides in the plastid. It is found in the chloroplast thylakoid membrane. Functionally, component of the cytochrome b6-f complex, which mediates electron transfer between photosystem II (PSII) and photosystem I (PSI), cyclic electron flow around PSI, and state transitions. This Jasminum nudiflorum (Winter jasmine) protein is Cytochrome f.